The chain runs to 628 residues: 1-deoxy-D-xylulose-5-phosphate synthase (628 aa).

Thiamine diphosphate is bound by residues histidine 72 and 113–115 (GHS). Aspartate 144 lines the Mg(2+) pocket. Residues 145–146 (GA), asparagine 173, tyrosine 284, and glutamate 366 contribute to the thiamine diphosphate site. Asparagine 173 serves as a coordination point for Mg(2+).

It belongs to the transketolase family. DXPS subfamily. Homodimer. Mg(2+) is required as a cofactor. It depends on thiamine diphosphate as a cofactor.

The enzyme catalyses D-glyceraldehyde 3-phosphate + pyruvate + H(+) = 1-deoxy-D-xylulose 5-phosphate + CO2. Its pathway is metabolic intermediate biosynthesis; 1-deoxy-D-xylulose 5-phosphate biosynthesis; 1-deoxy-D-xylulose 5-phosphate from D-glyceraldehyde 3-phosphate and pyruvate: step 1/1. Functionally, catalyzes the acyloin condensation reaction between C atoms 2 and 3 of pyruvate and glyceraldehyde 3-phosphate to yield 1-deoxy-D-xylulose-5-phosphate (DXP). The sequence is that of 1-deoxy-D-xylulose-5-phosphate synthase from Shouchella clausii (strain KSM-K16) (Alkalihalobacillus clausii).